The chain runs to 115 residues: NADH-ubiquinone oxidoreductase chain 3 (115 aa).

3 helical membrane-spanning segments follow: residues 3–23 (LILM…IVAF), 56–76 (FFLV…LLPL), and 84–104 (PTLM…GLIY).

The protein belongs to the complex I subunit 3 family.

It localises to the mitochondrion membrane. It catalyses the reaction a ubiquinone + NADH + 5 H(+)(in) = a ubiquinol + NAD(+) + 4 H(+)(out). In terms of biological role, core subunit of the mitochondrial membrane respiratory chain NADH dehydrogenase (Complex I) that is believed to belong to the minimal assembly required for catalysis. Complex I functions in the transfer of electrons from NADH to the respiratory chain. The immediate electron acceptor for the enzyme is believed to be ubiquinone. This Polypterus ornatipinnis (Ornate bichir) protein is NADH-ubiquinone oxidoreductase chain 3 (MT-ND3).